Consider the following 226-residue polypeptide: Ribonuclease 3 (226 aa).

The region spanning 6 to 128 (INRLQRKLGY…LIGGVFLDSD (123 aa)) is the RNase III domain. Glu41 contributes to the Mg(2+) binding site. Asp45 is an active-site residue. Positions 114 and 117 each coordinate Mg(2+). The active site involves Glu117. The DRBM domain occupies 155 to 225 (DPKTRLQEYL…AEQALKKLEL (71 aa)).

This sequence belongs to the ribonuclease III family. As to quaternary structure, homodimer. It depends on Mg(2+) as a cofactor.

It localises to the cytoplasm. It catalyses the reaction Endonucleolytic cleavage to 5'-phosphomonoester.. Its function is as follows. Digests double-stranded RNA. Involved in the processing of primary rRNA transcript to yield the immediate precursors to the large and small rRNAs (23S and 16S). Processes some mRNAs, and tRNAs when they are encoded in the rRNA operon. Processes pre-crRNA and tracrRNA of type II CRISPR loci if present in the organism. This is Ribonuclease 3 from Klebsiella pneumoniae (strain 342).